A 218-amino-acid polypeptide reads, in one-letter code: Elongation factor Ts (218 aa).

The segment at 82–85 (TDFV) is involved in Mg(2+) ion dislocation from EF-Tu.

It belongs to the EF-Ts family.

The protein resides in the cytoplasm. Associates with the EF-Tu.GDP complex and induces the exchange of GDP to GTP. It remains bound to the aminoacyl-tRNA.EF-Tu.GTP complex up to the GTP hydrolysis stage on the ribosome. This chain is Elongation factor Ts, found in Prochlorococcus marinus (strain MIT 9312).